The primary structure comprises 245 residues: 1-(5-phosphoribosyl)-5-[(5-phosphoribosylamino)methylideneamino] imidazole-4-carboxamide isomerase (245 aa).

The active-site Proton acceptor is Asp8. The Proton donor role is filled by Asp130.

It belongs to the HisA/HisF family.

It localises to the cytoplasm. It catalyses the reaction 1-(5-phospho-beta-D-ribosyl)-5-[(5-phospho-beta-D-ribosylamino)methylideneamino]imidazole-4-carboxamide = 5-[(5-phospho-1-deoxy-D-ribulos-1-ylimino)methylamino]-1-(5-phospho-beta-D-ribosyl)imidazole-4-carboxamide. It participates in amino-acid biosynthesis; L-histidine biosynthesis; L-histidine from 5-phospho-alpha-D-ribose 1-diphosphate: step 4/9. The sequence is that of 1-(5-phosphoribosyl)-5-[(5-phosphoribosylamino)methylideneamino] imidazole-4-carboxamide isomerase from Pseudomonas putida (strain ATCC 47054 / DSM 6125 / CFBP 8728 / NCIMB 11950 / KT2440).